A 185-amino-acid polypeptide reads, in one-letter code: Elongation factor P (185 aa).

The protein belongs to the elongation factor P family.

It localises to the cytoplasm. It functions in the pathway protein biosynthesis; polypeptide chain elongation. Its function is as follows. Involved in peptide bond synthesis. Stimulates efficient translation and peptide-bond synthesis on native or reconstituted 70S ribosomes in vitro. Probably functions indirectly by altering the affinity of the ribosome for aminoacyl-tRNA, thus increasing their reactivity as acceptors for peptidyl transferase. This is Elongation factor P from Bacillus cereus (strain B4264).